Reading from the N-terminus, the 397-residue chain is Guanine nucleotide-binding protein G(s) subunit alpha (397 aa).

Positions 1–23 (MGCLGNSKTEDQRNEEKAQREAN) are disordered. Gly-2 carries N-palmitoyl glycine lipidation. A lipid anchor (S-palmitoyl cysteine) is attached at Cys-3. Residues 8–23 (KTEDQRNEEKAQREAN) are compositionally biased toward basic and acidic residues. The 359-residue stretch at 39 to 397 (ATHRLLLLGA…RMHLRQYELL (359 aa)) folds into the G-alpha domain. The tract at residues 42 to 55 (RLLLLGAGESGKST) is G1 motif. Residues 47 to 55 (GAGESGKST), 182 to 189 (LLRCRVLT), 208 to 212 (DVGGQ), 277 to 280 (NKQD), and Ala-369 each bind GTP. Mg(2+) contacts are provided by Ser-54 and Thr-189. The tract at residues 181–189 (DLLRCRVLT) is G2 motif. Positions 204-213 (FHMFDVGGQR) are G3 motif. Residues 273–280 (ILFLNKQD) are G4 motif. The interval 367-372 (TCAVDT) is G5 motif.

This sequence belongs to the G-alpha family. G(s) subfamily. Heterotrimeric G proteins are composed of 3 units; alpha, beta and gamma. The alpha chain contains the guanine nucleotide binding site. Interacts with CRY1; the interaction may block GPCR-mediated regulation of cAMP concentrations. Interacts with ADCY6 and stimulates its adenylyl cyclase activity. Interacts with ADCY2 and ADCY5. Stimulates the ADCY5 adenylyl cyclase activity. Interaction with SASH1.

The protein localises to the cell membrane. Guanine nucleotide-binding proteins (G proteins) function as transducers in numerous signaling pathways controlled by G protein-coupled receptors (GPCRs). Signaling involves the activation of adenylyl cyclases, resulting in increased levels of the signaling molecule cAMP. GNAS functions downstream of several GPCRs, including beta-adrenergic receptors. Stimulates the Ras signaling pathway via RAPGEF2. The polypeptide is Guanine nucleotide-binding protein G(s) subunit alpha (GNAS) (Sus scrofa (Pig)).